The sequence spans 877 residues: SRP-independent targeting protein 1 (877 aa).

S309, S310, S311, S332, and S334 each carry phosphoserine. Disordered regions lie at residues 369-414 (LRKQ…PSND), 446-521 (DDYT…DVLS), and 550-579 (KPFN…SNHF). Positions 389 to 402 (RSQSYSSSNMSRSP) are enriched in low complexity. A coiled-coil region spans residues 412 to 441 (SNDELVYDELNNQINEVQDRAKNEEIVLYN). Residues 447–462 (DYTKERGEQEQDRTSY) are compositionally biased toward basic and acidic residues. Positions 470 to 501 (YDDEEGGNEDNYDDDEDDDDDDDDDDESDDEG) are enriched in acidic residues. Polar residues-rich tracts occupy residues 510-521 (LSRSGSSTDVLS) and 551-579 (PFNQ…SNHF). Glycyl lysine isopeptide (Lys-Gly) (interchain with G-Cter in ubiquitin) cross-links involve residues K668 and K670. Residues S692, S694, and S706 each carry the phosphoserine modification. The segment at 773–815 (SLPKEREDDNDSTNSTIVPNHPDNDNYNDNDNDNNTGINSNNF) is disordered. Positions 805-815 (DNNTGINSNNF) are enriched in low complexity. Position 841 is a phosphoserine (S841).

As to quaternary structure, interacts with ENV10/SND2.

It localises to the cytoplasm. Functions in the SND pathway, a SRP (signal recognition particle) and GET (guided entry of tail-anchored proteins) independent pathway for targeting a broad range of substrate proteins to the endoplasmic reticulum. SND functions in parallel to GET in targeting proteins with downstream hydrophobic motifs. The sequence is that of SRP-independent targeting protein 1 from Saccharomyces cerevisiae (strain ATCC 204508 / S288c) (Baker's yeast).